The following is a 268-amino-acid chain: Phosphatidylglycerol--prolipoprotein diacylglyceryl transferase (268 aa).

4 consecutive transmembrane segments (helical) span residues 14-34, 57-77, 90-110, and 117-137; these read LGPIKIHWYGLMYLLGIFAGW, LTFYVALGVILGGRIGYIIFY, FFLWDGGMSFHGGFIGVLIAF, and IGANFFDLGEFIAPVIPIGLG. Residue arginine 140 participates in a 1,2-diacyl-sn-glycero-3-phospho-(1'-sn-glycerol) binding. 3 helical membrane passes run 174–194, 200–220, and 238–258; these read QLFEFFFEGVVLFSVLWLVTI, YLVLGLFMFLYGCARFICEFF, and GQILSIPMILLGAVILIAVFI.

Belongs to the Lgt family.

The protein localises to the cell inner membrane. The enzyme catalyses L-cysteinyl-[prolipoprotein] + a 1,2-diacyl-sn-glycero-3-phospho-(1'-sn-glycerol) = an S-1,2-diacyl-sn-glyceryl-L-cysteinyl-[prolipoprotein] + sn-glycerol 1-phosphate + H(+). The protein operates within protein modification; lipoprotein biosynthesis (diacylglyceryl transfer). Catalyzes the transfer of the diacylglyceryl group from phosphatidylglycerol to the sulfhydryl group of the N-terminal cysteine of a prolipoprotein, the first step in the formation of mature lipoproteins. In Francisella tularensis subsp. mediasiatica (strain FSC147), this protein is Phosphatidylglycerol--prolipoprotein diacylglyceryl transferase.